A 58-amino-acid chain; its full sequence is Cecropin-A (58 aa).

The N-terminal stretch at 1–23 (MNFSKIFIFVVLAVLLLCSQTEA) is a signal peptide. Leucine 57 bears the Leucine amide mark.

This sequence belongs to the cecropin family. Relatively abundant in head, thorax and to a lesser extent in abdominal carcass and anterior midgut.

It localises to the secreted. In terms of biological role, antibacterial activity against several Gram-positive and Gram-negative bacteria. Antifungal activity against A.fumigatus, B.cinerea, F.culmorum, F.oxysporum, N.crassa, C.albicans, C.neoformans and S.cerevisiae. The chain is Cecropin-A (CecA) from Anopheles gambiae (African malaria mosquito).